Reading from the N-terminus, the 598-residue chain is Aspartate--tRNA(Asp/Asn) ligase (598 aa).

Glu182 contacts L-aspartate. The interval Gln206 to Lys209 is aspartate. Residue Arg228 coordinates L-aspartate. Residues Arg228–Glu230 and Gln237 contribute to the ATP site. Residue His456 participates in L-aspartate binding. Glu490 is a binding site for ATP. Arg497 contacts L-aspartate. Gly542 to Arg545 is an ATP binding site.

It belongs to the class-II aminoacyl-tRNA synthetase family. Type 1 subfamily. Homodimer.

It is found in the cytoplasm. It carries out the reaction tRNA(Asx) + L-aspartate + ATP = L-aspartyl-tRNA(Asx) + AMP + diphosphate. In terms of biological role, aspartyl-tRNA synthetase with relaxed tRNA specificity since it is able to aspartylate not only its cognate tRNA(Asp) but also tRNA(Asn). Reaction proceeds in two steps: L-aspartate is first activated by ATP to form Asp-AMP and then transferred to the acceptor end of tRNA(Asp/Asn). The polypeptide is Aspartate--tRNA(Asp/Asn) ligase (Lachnoclostridium phytofermentans (strain ATCC 700394 / DSM 18823 / ISDg) (Clostridium phytofermentans)).